The sequence spans 339 residues: Glycerol-3-phosphate dehydrogenase [NAD(P)+] (339 aa).

Residues Ser-14, Tyr-15, His-35, and Lys-109 each contribute to the NADPH site. 3 residues coordinate sn-glycerol 3-phosphate: Lys-109, Gly-138, and Thr-140. Ala-142 is a binding site for NADPH. Residues Lys-194, Asp-247, Ser-257, Arg-258, and Asn-259 each contribute to the sn-glycerol 3-phosphate site. The Proton acceptor role is filled by Lys-194. Arg-258 contributes to the NADPH binding site. NADPH contacts are provided by Val-282 and Glu-284.

The protein belongs to the NAD-dependent glycerol-3-phosphate dehydrogenase family.

It localises to the cytoplasm. The catalysed reaction is sn-glycerol 3-phosphate + NAD(+) = dihydroxyacetone phosphate + NADH + H(+). It carries out the reaction sn-glycerol 3-phosphate + NADP(+) = dihydroxyacetone phosphate + NADPH + H(+). It functions in the pathway membrane lipid metabolism; glycerophospholipid metabolism. In terms of biological role, catalyzes the reduction of the glycolytic intermediate dihydroxyacetone phosphate (DHAP) to sn-glycerol 3-phosphate (G3P), the key precursor for phospholipid synthesis. This is Glycerol-3-phosphate dehydrogenase [NAD(P)+] from Shewanella amazonensis (strain ATCC BAA-1098 / SB2B).